Consider the following 474-residue polypeptide: Bifunctional protein HldE (474 aa).

Positions 1–318 are ribokinase; it reads MKLSMPRFDQ…RAIQREEGSE (318 aa). 194 to 197 serves as a coordination point for ATP; it reads NLSE. The active site involves D263. Positions 343–474 are cytidylyltransferase; that stretch reads FTNGCFDILH…AIVEKIRGQG (132 aa).

It in the N-terminal section; belongs to the carbohydrate kinase PfkB family. In the C-terminal section; belongs to the cytidylyltransferase family. As to quaternary structure, homodimer.

It catalyses the reaction D-glycero-beta-D-manno-heptose 7-phosphate + ATP = D-glycero-beta-D-manno-heptose 1,7-bisphosphate + ADP + H(+). The catalysed reaction is D-glycero-beta-D-manno-heptose 1-phosphate + ATP + H(+) = ADP-D-glycero-beta-D-manno-heptose + diphosphate. Its pathway is nucleotide-sugar biosynthesis; ADP-L-glycero-beta-D-manno-heptose biosynthesis; ADP-L-glycero-beta-D-manno-heptose from D-glycero-beta-D-manno-heptose 7-phosphate: step 1/4. The protein operates within nucleotide-sugar biosynthesis; ADP-L-glycero-beta-D-manno-heptose biosynthesis; ADP-L-glycero-beta-D-manno-heptose from D-glycero-beta-D-manno-heptose 7-phosphate: step 3/4. Its function is as follows. Catalyzes the phosphorylation of D-glycero-D-manno-heptose 7-phosphate at the C-1 position to selectively form D-glycero-beta-D-manno-heptose-1,7-bisphosphate. In terms of biological role, catalyzes the ADP transfer from ATP to D-glycero-beta-D-manno-heptose 1-phosphate, yielding ADP-D-glycero-beta-D-manno-heptose. The protein is Bifunctional protein HldE of Pseudomonas savastanoi pv. phaseolicola (strain 1448A / Race 6) (Pseudomonas syringae pv. phaseolicola (strain 1448A / Race 6)).